The chain runs to 800 residues: Putative antiporter subunit mnhA2 (800 aa).

Transmembrane regions (helical) follow at residues 1 to 21 (MSLV…LLMS), 33 to 53 (IALV…PSVA), 78 to 98 (GLSL…FFYA), 118 to 138 (LFMF…MYIF), 167 to 187 (FMIT…LYIM), 207 to 227 (GLFI…SAQF), 241 to 261 (TPVS…FLLL), 273 to 293 (YVYI…ITAL), 300 to 320 (GILA…VGIG), 331 to 351 (IASI…NHAI), 387 to 407 (LVMT…GFLS), 424 to 444 (FSLI…VFTF), 472 to 492 (PWLF…IFFV), 527 to 547 (GFNI…VLAI), 595 to 615 (IIMT…RIGL), 627 to 647 (GALE…LIFI), 651 to 671 (LTMV…FIAM), 676 to 696 (LALT…VSFS), 712 to 732 (IIKI…IFIT), and 768 to 788 (LDTL…YTLL).

The protein belongs to the CPA3 antiporters (TC 2.A.63) subunit A family. May form a heterooligomeric complex that consists of seven subunits: mnhA2, mnhB2, mnhC2, mnhD2, mnhE2, mnhF2 and mnhG2.

The protein resides in the cell membrane. The protein is Putative antiporter subunit mnhA2 (mnhA2) of Staphylococcus aureus (strain MSSA476).